A 773-amino-acid chain; its full sequence is Tyrosine kinase receptor Cad96Ca (773 aa).

An N-terminal signal peptide occupies residues 1–48; it reads MVYHHHNHESRIIHCRKQLTSWRRRSLLLTIIVVTATVVSLISQEAEA. The Extracellular segment spans residues 49–315; it reads HNQNAPPILY…ITIFSLKSGT (267 aa). The region spanning 58-172 is the Cadherin domain; it reads YVRERNWRIS…ENSSGYRPQT (115 aa). Asn126, Asn164, and Asn180 each carry an N-linked (GlcNAc...) asparagine glycan. Positions 196–302 are disordered; that stretch reads SIRNGLPNSR…TPSGGHHNNS (107 aa). Residues 209 to 235 show a composition bias toward pro residues; that stretch reads WYPPVPQNNIFGPPPFGNNYPPPPPNI. Acidic residues predominate over residues 243–253; the sequence is SGEEEQPDEEV. Composition is skewed to polar residues over residues 254-283 and 290-302; these read TPTT…STRV and ETTT…HNNS. Residues Asn278, Asn279, Asn300, and Asn301 are each glycosylated (N-linked (GlcNAc...) asparagine). Residues 316–336 form a helical membrane-spanning segment; the sequence is IPIVVTVGGFFVAIAVLLAYL. The Cytoplasmic portion of the chain corresponds to 337 to 773; that stretch reads CRRRLCAISR…NIVSLSGEKL (437 aa). Disordered stretches follow at residues 352–373 and 411–447; these read KEKE…LTDD and TGVT…AGSS. The segment covering 361–373 has biased composition (polar residues); that stretch reads SNQSQLSSTLTDD. A compositionally biased stretch (low complexity) spans 411 to 433; that stretch reads TGVTNGGVSSPGVPSPGTGEPGS. Residues 470–749 form the Protein kinase domain; the sequence is LKFFNILGEG…MLDKLLHTEM (280 aa). ATP contacts are provided by residues 476 to 484 and Lys504; that span reads LGEGAFGQV. Asp610 functions as the Proton acceptor in the catalytic mechanism.

The protein belongs to the protein kinase superfamily. Tyr protein kinase family. Fibroblast growth factor receptor subfamily.

It localises to the membrane. It carries out the reaction L-tyrosyl-[protein] + ATP = O-phospho-L-tyrosyl-[protein] + ADP + H(+). The polypeptide is Tyrosine kinase receptor Cad96Ca (Cad96Ca) (Drosophila melanogaster (Fruit fly)).